A 121-amino-acid chain; its full sequence is Small ribosomal subunit protein uS13 (121 aa).

The disordered stretch occupies residues 97–121; the sequence is PVRGQKTHSNARTRKGPRASRIKKK. Residues 101–121 are compositionally biased toward basic residues; the sequence is QKTHSNARTRKGPRASRIKKK.

It belongs to the universal ribosomal protein uS13 family. In terms of assembly, part of the 30S ribosomal subunit. Forms a loose heterodimer with protein S19. Forms two bridges to the 50S subunit in the 70S ribosome.

Functionally, located at the top of the head of the 30S subunit, it contacts several helices of the 16S rRNA. In the 70S ribosome it contacts the 23S rRNA (bridge B1a) and protein L5 of the 50S subunit (bridge B1b), connecting the 2 subunits; these bridges are implicated in subunit movement. Contacts the tRNAs in the A and P-sites. This Kosmotoga olearia (strain ATCC BAA-1733 / DSM 21960 / TBF 19.5.1) protein is Small ribosomal subunit protein uS13.